A 340-amino-acid polypeptide reads, in one-letter code: Glutaminase 2 (340 aa).

Substrate is bound by residues S89, N140, N191, Y215, and Y267.

The protein belongs to the glutaminase family. As to quaternary structure, homotetramer.

The catalysed reaction is L-glutamine + H2O = L-glutamate + NH4(+). The chain is Glutaminase 2 from Yersinia pestis.